The sequence spans 523 residues: Maturase K (523 aa).

The protein belongs to the intron maturase 2 family. MatK subfamily.

It localises to the plastid. The protein localises to the chloroplast. In terms of biological role, usually encoded in the trnK tRNA gene intron. Probably assists in splicing its own and other chloroplast group II introns. The chain is Maturase K from Asphodeline lutea (King's spear).